The chain runs to 427 residues: Histidine--tRNA ligase (427 aa).

The protein belongs to the class-II aminoacyl-tRNA synthetase family. Homodimer.

The protein localises to the cytoplasm. It catalyses the reaction tRNA(His) + L-histidine + ATP = L-histidyl-tRNA(His) + AMP + diphosphate + H(+). This Alteromonas mediterranea (strain DSM 17117 / CIP 110805 / LMG 28347 / Deep ecotype) protein is Histidine--tRNA ligase.